The primary structure comprises 200 residues: Shikimate kinase (200 aa).

ATP is bound at residue 33-38 (GAGKST). Ser-37 is a Mg(2+) binding site. The substrate site is built by Asp-55, Arg-79, and Gly-101. ATP is bound at residue Arg-139. A substrate-binding site is contributed by Arg-158.

The protein belongs to the shikimate kinase family. In terms of assembly, monomer. Mg(2+) serves as cofactor.

Its subcellular location is the cytoplasm. The enzyme catalyses shikimate + ATP = 3-phosphoshikimate + ADP + H(+). It functions in the pathway metabolic intermediate biosynthesis; chorismate biosynthesis; chorismate from D-erythrose 4-phosphate and phosphoenolpyruvate: step 5/7. Catalyzes the specific phosphorylation of the 3-hydroxyl group of shikimic acid using ATP as a cosubstrate. This Brucella abortus (strain S19) protein is Shikimate kinase.